A 257-amino-acid polypeptide reads, in one-letter code: Large ribosomal subunit protein uL2 (257 aa).

The segment at V207–P230 is disordered.

This sequence belongs to the universal ribosomal protein uL2 family. Component of the large ribosomal subunit.

The protein resides in the cytoplasm. Component of the large ribosomal subunit. The ribosome is a large ribonucleoprotein complex responsible for the synthesis of proteins in the cell. This chain is Large ribosomal subunit protein uL2 (rpl8), found in Danio rerio (Zebrafish).